Reading from the N-terminus, the 185-residue chain is dTDP-4-dehydrorhamnose 3,5-epimerase (185 aa).

Substrate contacts are provided by residues Arg23, Glu28, 47–49, and Arg59; that span reads QDN. His62 acts as the Proton acceptor in catalysis. The substrate site is built by Lys72 and His119. Tyr132 (proton donor) is an active-site residue. Residues Asp143 and Lys168 each contribute to the substrate site.

The protein belongs to the dTDP-4-dehydrorhamnose 3,5-epimerase family. As to quaternary structure, homodimer.

The enzyme catalyses dTDP-4-dehydro-6-deoxy-alpha-D-glucose = dTDP-4-dehydro-beta-L-rhamnose. Its pathway is carbohydrate biosynthesis; dTDP-L-rhamnose biosynthesis. It participates in bacterial outer membrane biogenesis; LPS O-antigen biosynthesis. In terms of biological role, catalyzes the epimerization of the C3' and C5'positions of dTDP-6-deoxy-D-xylo-4-hexulose, forming dTDP-6-deoxy-L-lyxo-4-hexulose. This chain is dTDP-4-dehydrorhamnose 3,5-epimerase (rfbC), found in Escherichia coli (strain K12).